Consider the following 129-residue polypeptide: MGRRDAQLLAALLVLGLCALAGSEKPSPCQCSRLSPHNRTNCGFPGITSDQCFDNGCCFDSSVTGVPWCFHPLPKQESDQCVMEVSDRRNCGYPGISPEECASRKCCFSNFIFEVPWCFFPKSVEDCHY.

The signal sequence occupies residues 1-23 (MGRRDAQLLAALLVLGLCALAGS). 2 consecutive P-type domains span residues 29 to 73 (CQCS…FHPL) and 79 to 122 (DQCV…FFPK). 7 disulfide bridges follow: cysteine 29-cysteine 127, cysteine 31-cysteine 58, cysteine 42-cysteine 57, cysteine 52-cysteine 69, cysteine 81-cysteine 107, cysteine 91-cysteine 106, and cysteine 101-cysteine 118.

As to expression, stomach.

The protein localises to the secreted. Its function is as follows. Inhibits gastrointestinal motility and gastric acid secretion. Could function as a structural component of gastric mucus, possibly by stabilizing glycoproteins in the mucus gel through interactions with carbohydrate side chains. In Homo sapiens (Human), this protein is Trefoil factor 2 (TFF2).